The primary structure comprises 132 residues: Nucleoid-associated protein EspR (132 aa).

Positions 38-50 form a DNA-binding region, H-T-H motif; the sequence is ITMSAPYLSQLRS.

As to quaternary structure, homodimer. Binds DNA as a dimer of dimers.

The protein resides in the cytoplasm. It is found in the nucleoid. In terms of biological role, virulence regulator that has both architectural and regulatory roles. Impacts cell wall functions and pathogenesis through regulation of multiple genes. In Mycobacterium tuberculosis (strain CDC 1551 / Oshkosh), this protein is Nucleoid-associated protein EspR.